A 57-amino-acid chain; its full sequence is Ribulose bisphosphate carboxylase large chain (57 aa).

A propeptide spanning residues 1-2 (MS) is cleaved from the precursor. Pro3 is modified (N-acetylproline). At Lys14 the chain carries N6,N6,N6-trimethyllysine.

It belongs to the RuBisCO large chain family. Type I subfamily. As to quaternary structure, heterohexadecamer of 8 large chains and 8 small chains.

It is found in the plastid. Its subcellular location is the chloroplast. It carries out the reaction 2 (2R)-3-phosphoglycerate + 2 H(+) = D-ribulose 1,5-bisphosphate + CO2 + H2O. The enzyme catalyses D-ribulose 1,5-bisphosphate + O2 = 2-phosphoglycolate + (2R)-3-phosphoglycerate + 2 H(+). In terms of biological role, ruBisCO catalyzes two reactions: the carboxylation of D-ribulose 1,5-bisphosphate, the primary event in carbon dioxide fixation, as well as the oxidative fragmentation of the pentose substrate in the photorespiration process. Both reactions occur simultaneously and in competition at the same active site. The polypeptide is Ribulose bisphosphate carboxylase large chain (rbcL) (Buxus sempervirens (Common box)).